The chain runs to 99 residues: Malonate decarboxylase acyl carrier protein (99 aa).

At Ser25 the chain carries O-(phosphoribosyl dephospho-coenzyme A)serine.

Belongs to the MdcC family. In terms of processing, covalently binds the prosthetic group of malonate decarboxylase.

The protein resides in the cytoplasm. Its function is as follows. Subunit of malonate decarboxylase, it is an acyl carrier protein to which acetyl and malonyl thioester residues are bound via a 2'-(5''-phosphoribosyl)-3'-dephospho-CoA prosthetic group and turn over during the catalytic mechanism. The polypeptide is Malonate decarboxylase acyl carrier protein (Stutzerimonas stutzeri (strain A1501) (Pseudomonas stutzeri)).